The sequence spans 1059 residues: Tyrosine-protein kinase-like otk (1059 aa).

A signal peptide spans 1-23 (MDMLMMWSICLFVCIFMAPFSCG). The Extracellular segment spans residues 24–597 (SGSSSRFIQV…GDGGFLATRA (574 aa)). Ig-like C2-type domains lie at 28 to 112 (SRFI…REAS), 113 to 202 (PTAK…RVMS), 258 to 377 (PEGL…LAIN), 380 to 475 (PGIL…VSIN), and 480 to 570 (PKFS…AVLT). N-linked (GlcNAc...) asparagine glycosylation is present at asparagine 42. Cystine bridges form between cysteine 49–cysteine 99, cysteine 141–cysteine 191, cysteine 283–cysteine 366, and cysteine 411–cysteine 459. Asparagine 348, asparagine 429, asparagine 441, asparagine 456, asparagine 469, asparagine 524, and asparagine 536 each carry an N-linked (GlcNAc...) asparagine glycan. A disulfide bridge connects residues cysteine 502 and cysteine 554. A helical transmembrane segment spans residues 598–618 (VLITMTVALAYIVLVVGLMLW). At 619–1059 (CRYRRQARKA…ALSKAMQNSE (441 aa)) the chain is on the cytoplasmic side. The segment at 639–695 (GGEQAGGEGSTSGNPKASEQEPCLGKQQRNGRNGKSKSNGDPQKSDDTACSQQSRAS) is disordered. The span at 665-693 (QQRNGRNGKSKSNGDPQKSDDTACSQQSR) shows a compositional bias: polar residues. Serine 698 carries the phosphoserine modification. One can recognise a Protein kinase; inactive domain in the interval 712-1055 (LSELIQIGRG…QLGAALSKAM (344 aa)). The tract at residues 739–781 (AQANDKDSDNDKQHSNSENGSGGSSGSTTLSTLNEKRRSKTSM) is disordered. The segment covering 742-753 (NDKDSDNDKQHS) has biased composition (basic and acidic residues).

The protein belongs to the protein kinase superfamily. Tyr protein kinase family. Insulin receptor subfamily. As to quaternary structure, interacts with plexA; component of a receptor complex that mediates the repulsive signaling in response to Semaphorin ligands.

It localises to the cell membrane. Functionally, acts as a calcium-dependent, homophilic cell adhesion molecule that regulates neural recognition during the development of the nervous system. Component of the repulsive Plexin signaling response to regulate motor axon guidance at the embryonic stage. Also component of a receptor complex that is required in the adult visual system to innervate the lamina layer; specific targeting of R1-R6 axons. The polypeptide is Tyrosine-protein kinase-like otk (Drosophila willistoni (Fruit fly)).